A 116-amino-acid chain; its full sequence is Protein Rev (116 aa).

Phosphoserine; by host CK2 occurs at positions 5 and 8. The tract at residues 18-26 (LIKVLYQSN) is homomultimerization. A disordered region spans residues 23 to 48 (YQSNPPPSSEGTRQARRNRRRRWRER). The short motif at 34–50 (TRQARRNRRRRWRERQR) is the Nuclear localization signal and RNA-binding (RRE) element. Residues 36–47 (QARRNRRRRWRE) show a composition bias toward basic residues. The Nuclear export signal and binding to XPO1 signature appears at 73-84 (FQLPPLERLTLD). The interval 90–116 (GTSGTQGVGSPQILVESPPVLDSGTKE) is disordered. 2 positions are modified to phosphoserine; by host: S92 and S99.

Belongs to the HIV-1 REV protein family. Homomultimer; when bound to the RRE. Multimeric assembly is essential for activity and may involve XPO1. Binds to human KPNB1, XPO1, TNPO1, RANBP5 and IPO7. Interacts with the viral Integrase. Interacts with human KHDRBS1. Interacts with human NAP1; this interaction decreases Rev multimerization and stimulates its activity. Interacts with human DEAD-box helicases DDX3 and DDX24; these interactions may serve for viral RNA export to the cytoplasm and packaging, respectively. Interacts with human PSIP1; this interaction may inhibit HIV-1 DNA integration by promoting dissociation of the Integrase-LEDGF/p75 complex. In terms of processing, asymmetrically arginine dimethylated at one site by host PRMT6. Methylation impairs the RNA-binding activity and export of viral RNA from the nucleus to the cytoplasm. Phosphorylated by protein kinase CK2. Presence of, and maybe binding to the N-terminus of the regulatory beta subunit of CK2 is necessary for CK2-mediated Rev's phosphorylation.

The protein localises to the host nucleus. It localises to the host nucleolus. The protein resides in the host cytoplasm. Its function is as follows. Escorts unspliced or incompletely spliced viral pre-mRNAs (late transcripts) out of the nucleus of infected cells. These pre-mRNAs carry a recognition sequence called Rev responsive element (RRE) located in the env gene, that is not present in fully spliced viral mRNAs (early transcripts). This function is essential since most viral proteins are translated from unspliced or partially spliced pre-mRNAs which cannot exit the nucleus by the pathway used by fully processed cellular mRNAs. Rev itself is translated from a fully spliced mRNA that readily exits the nucleus. Rev's nuclear localization signal (NLS) binds directly to KPNB1/Importin beta-1 without previous binding to KPNA1/Importin alpha-1. KPNB1 binds to the GDP bound form of RAN (Ran-GDP) and targets Rev to the nucleus. In the nucleus, the conversion from Ran-GDP to Ran-GTP dissociates Rev from KPNB1 and allows Rev's binding to the RRE in viral pre-mRNAs. Rev multimerization on the RRE via cooperative assembly exposes its nuclear export signal (NES) to the surface. Rev can then form a complex with XPO1/CRM1 and Ran-GTP, leading to nuclear export of the complex. Conversion from Ran-GTP to Ran-GDP mediates dissociation of the Rev/RRE/XPO1/RAN complex, so that Rev can return to the nucleus for a subsequent round of export. Beside KPNB1, also seems to interact with TNPO1/Transportin-1, RANBP5/IPO5 and IPO7/RANBP7 for nuclear import. The nucleoporin-like HRB/RIP is an essential cofactor that probably indirectly interacts with Rev to release HIV RNAs from the perinuclear region to the cytoplasm. This chain is Protein Rev, found in Human immunodeficiency virus type 1 group M subtype B (isolate YU-2) (HIV-1).